The primary structure comprises 301 residues: uncharacterized protein (301 aa).

The signal sequence occupies residues 1–25 (MKFKNTLSIFKILIILFSFYNVAFS). The Extracellular segment spans residues 26–279 (DDTEKYTFKG…STTGSKDSST (254 aa)). The disordered stretch occupies residues 174 to 281 (LYTGSSNTPN…TGSKDSSTGN (108 aa)). Asparagine 191, asparagine 212, asparagine 234, and asparagine 241 each carry an N-linked (GlcNAc...) asparagine glycan. The span at 204 to 234 (SSSDSTNSNSSSTDTASSSPSSSPSSSPSPN) shows a compositional bias: low complexity. Residues 254–281 (GGVETSTAGSSTGTTSSTTGSKDSSTGN) show a composition bias toward low complexity. The helical transmembrane segment at 280-300 (GNSILPTLIIVTFFVLTLVIM) threads the bilayer. Position 301 (serine 301) is a topological domain, cytoplasmic.

It is found in the membrane. This is an uncharacterized protein from Dictyostelium discoideum (Social amoeba).